A 187-amino-acid chain; its full sequence is Holliday junction resolvase (187 aa).

This sequence belongs to the RuvC family. Poxviruses-type subfamily. Mg(2+) is required as a cofactor. Acylated by palmitic acid group(s).

The protein localises to the membrane. Its function is as follows. Nuclease that specifically cleaves and resolves four-way DNA Holliday junctions into linear duplex products. In Vaccinia virus (strain Ankara) (VACV), this protein is Holliday junction resolvase.